The following is a 438-amino-acid chain: Putative galacturan 1,4-alpha-galacturonidase A (438 aa).

A signal peptide spans 1 to 21 (MRMPSAISIGVFAGLSLAASA). Residues asparagine 28, asparagine 102, asparagine 111, and asparagine 197 are each glycosylated (N-linked (GlcNAc...) asparagine). 2 PbH1 repeats span residues 186-222 (SSHI…DTYR) and 223-244 (SDHI…AFKG). Aspartate 237 acts as the Proton donor in catalysis. Residues asparagine 245, asparagine 253, asparagine 279, asparagine 325, asparagine 353, asparagine 372, and asparagine 388 are each glycosylated (N-linked (GlcNAc...) asparagine). PbH1 repeat units follow at residues 246–266 (STNI…AFGS), 277–303 (VENV…YFKS), and 323–344 (VRNV…YIDT). Cysteine 397 and cysteine 403 form a disulfide bridge. An N-linked (GlcNAc...) asparagine glycan is attached at asparagine 418.

It belongs to the glycosyl hydrolase 28 family.

It localises to the secreted. The enzyme catalyses [(1-&gt;4)-alpha-D-galacturonosyl](n) + H2O = alpha-D-galacturonate + [(1-&gt;4)-alpha-D-galacturonosyl](n-1). In terms of biological role, specific in hydrolyzing the terminal glycosidic bond of polygalacturonic acid and oligogalacturonates. This is Putative galacturan 1,4-alpha-galacturonidase A (rgxA) from Aspergillus niger.